A 156-amino-acid polypeptide reads, in one-letter code: dCTP deaminase (156 aa).

DCTP contacts are provided by residues R79–R84, D95, Q124, and Y138.

This sequence belongs to the dCTP deaminase family. In terms of assembly, homotrimer.

The catalysed reaction is dCTP + H2O + H(+) = dUTP + NH4(+). Its pathway is pyrimidine metabolism; dUMP biosynthesis; dUMP from dCTP (dUTP route): step 1/2. Functionally, catalyzes the deamination of dCTP to dUTP. This chain is dCTP deaminase, found in Thermococcus sibiricus (strain DSM 12597 / MM 739).